Reading from the N-terminus, the 311-residue chain is Cytosolic Fe-S cluster assembly factor Nubp1 homolog (311 aa).

Positions 1 to 21 (MQAPPPEHCPGVESEDAGKGS) are disordered. Residues Cys-9, Cys-23, Cys-26, and Cys-32 each contribute to the [4Fe-4S] cluster site. Residue 63–70 (GKGGVGKS) participates in ATP binding. 2 residues coordinate [4Fe-4S] cluster: Cys-240 and Cys-243.

Belongs to the Mrp/NBP35 ATP-binding proteins family. NUBP1/NBP35 subfamily. Heterotetramer of 2 Nubp1 and 2 Nubp2 chains. Requires [4Fe-4S] cluster as cofactor.

The protein localises to the cytoplasm. Functionally, component of the cytosolic iron-sulfur (Fe/S) protein assembly (CIA) machinery. Required for maturation of extramitochondrial Fe-S proteins. The Nubp1-Nubp2 heterotetramer forms a Fe-S scaffold complex, mediating the de novo assembly of an Fe-S cluster and its transfer to target apoproteins. This is Cytosolic Fe-S cluster assembly factor Nubp1 homolog from Drosophila sechellia (Fruit fly).